Here is a 176-residue protein sequence, read N- to C-terminus: Inner membrane-spanning protein YciB (176 aa).

A run of 6 helical transmembrane segments spans residues 3 to 23, 24 to 44, 49 to 69, 81 to 101, 121 to 141, and 149 to 169; these read FLFD…WGIF, TATA…AFRH, TMLW…LVLH, LYWL…NNLI, VAWA…VHNF, and FKLF…SLWL.

It belongs to the YciB family.

Its subcellular location is the cell inner membrane. Plays a role in cell envelope biogenesis, maintenance of cell envelope integrity and membrane homeostasis. The sequence is that of Inner membrane-spanning protein YciB from Burkholderia vietnamiensis (strain G4 / LMG 22486) (Burkholderia cepacia (strain R1808)).